The primary structure comprises 177 residues: Dual-action ribosomal maturation protein DarP (177 aa).

The segment at Met1–Asp26 is disordered.

Belongs to the DarP family.

The protein localises to the cytoplasm. Functionally, member of a network of 50S ribosomal subunit biogenesis factors which assembles along the 30S-50S interface, preventing incorrect 23S rRNA structures from forming. Promotes peptidyl transferase center (PTC) maturation. The sequence is that of Dual-action ribosomal maturation protein DarP from Shewanella sp. (strain ANA-3).